Here is a 308-residue protein sequence, read N- to C-terminus: Vomeronasal type-1 receptor 92 (308 aa).

Residues 1-18 (MNKDNTLHTIMKITMFSE) are Extracellular-facing. The chain crosses the membrane as a helical span at residues 19 to 39 (VSVGISANSILFFAHLCMLLG). Residues 40-48 (ENRPKPFHL) are Cytoplasmic-facing. A helical transmembrane segment spans residues 49 to 69 (YIVSLSLTQLILLITMGLIAV). The Extracellular segment spans residues 70-91 (DMFMSWGRWDSTPCQSLIYLHR). C83 and C170 are oxidised to a cystine. A helical transmembrane segment spans residues 92–112 (LLRGFTLCAACLLNVFWMITL). At 113–132 (SPRSSCLSKFKHNSPHHISG) the chain is on the cytoplasmic side. The helical transmembrane segment at 133 to 153 (AFLFLCVLYMSFSSHLLVSII) threads the bilayer. Residues 154–188 (ATPNLTSNIFMYVTQSCSLLPMSYSRTSTFSTTIA) are Extracellular-facing. A glycan (N-linked (GlcNAc...) asparagine) is linked at N157. Residues 189 to 209 (IREAFLISLMALSSGFMVTLL) form a helical membrane-spanning segment. The Cytoplasmic segment spans residues 210-236 (WRHKKQAQHLHSTSLSSKASPERRATR). Residues 237–257 (TILLLMSFFVVLYILENVVFY) traverse the membrane as a helical segment. Over 258–267 (SRMKFKDGSM) the chain is Extracellular. The chain crosses the membrane as a helical span at residues 268–288 (FYCVQIIVSHSYATISPFVFI). Residues 289-308 (CTEKHMTKILRSVCTRIINI) lie on the Cytoplasmic side of the membrane.

It belongs to the G-protein coupled receptor 1 family.

The protein resides in the cell membrane. Functionally, putative pheromone receptor implicated in the regulation of social as well as reproductive behavior. This is Vomeronasal type-1 receptor 92 (Vom1r92) from Rattus norvegicus (Rat).